The following is a 633-amino-acid chain: Probable potassium transport system protein Kup 2 (633 aa).

Helical transmembrane passes span 18–38 (FVGL…TSPL), 61–81 (LISL…VLFL), 107–127 (VPVL…DAMI), 143–163 (ITPA…IVLF), 176–196 (FFGP…VIHI), 211–231 (ALSF…AVFL), 255–275 (WFVL…ALVL), 293–313 (ALLP…QAVI), 345–365 (IYVP…IFSF), 371–391 (LATA…MLAF), 402–422 (FMLA…FLAA), and 429–449 (DGGW…WTWT).

Belongs to the HAK/KUP transporter (TC 2.A.72) family.

The protein resides in the cell inner membrane. The catalysed reaction is K(+)(in) + H(+)(in) = K(+)(out) + H(+)(out). Functionally, transport of potassium into the cell. Likely operates as a K(+):H(+) symporter. The protein is Probable potassium transport system protein Kup 2 of Rhizobium etli (strain ATCC 51251 / DSM 11541 / JCM 21823 / NBRC 15573 / CFN 42).